The chain runs to 568 residues: Zinc finger protein 76 (568 aa).

A Glycyl lysine isopeptide (Lys-Gly) (interchain with G-Cter in SUMO2) cross-link involves residue Lys-24. 3 repeat units span residues 34–45 (IQLEDGTTAYIH), 62–73 (VQLEDGSMAYIH), and 88–99 (VQLEDGSTAYIH). The segment at 34–99 (IQLEDGTTAY…LEDGSTAYIH (66 aa)) is 3 X 12 AA approximate repeats. 7 C2H2-type zinc fingers span residues 165-189 (FRCGYKGCGRLYTTAHHLKVHERAH), 195-219 (YRCDFPSCGKAFATGYGLKSHVRTH), 225-249 (YKCPEELCSKAFKTSGDLQKHVRTH), 255-279 (FRCPFEGCGRSFTTSNIRKVHVRTH), 285-309 (YTCPEPHCGRGFTSATNYKNHVRIH), 315-339 (YVCTVPGCGKRFTEYSSLYKHHVVH), and 345-368 (YTCSSCGKTYRQTSTLAMHKRSAH). Residues 365–402 (RSAHGELEATEESEQALYEQQQLEAASAAEESPPPKPT) are disordered. Over residues 379-395 (QALYEQQQLEAASAAEE) the composition is skewed to low complexity.

Belongs to the krueppel C2H2-type zinc-finger protein family.

It is found in the nucleus. Functionally, may be involved in transcriptional regulation. The protein is Zinc finger protein 76 (Znf76) of Mus musculus (Mouse).